Here is a 100-residue protein sequence, read N- to C-terminus: Large ribosomal subunit protein bL21 (100 aa).

It belongs to the bacterial ribosomal protein bL21 family. As to quaternary structure, part of the 50S ribosomal subunit. Contacts protein L20.

In terms of biological role, this protein binds to 23S rRNA in the presence of protein L20. This chain is Large ribosomal subunit protein bL21, found in Wolbachia pipientis wMel.